A 407-amino-acid chain; its full sequence is uncharacterized protein (407 aa).

12 consecutive transmembrane segments (helical) span residues 22–42 (IVSVVSFTFICYLTIGLPLAV), 51–71 (LGFSAIVAGAAISVQYFATLA), 101–121 (ALLLSAFAFARWPAASIVLLV), 126–146 (VLGIGESLVGTGAILWGIGRV), 154–174 (VISWNGIATYGALAIGAPVGV), 179–199 (ALIPAVLGMLVIALAALGYYL), 227–247 (GLGLALGSAGFGSIATFITLY), 258–278 (LSLTVFGTLFIGARLLFANTI), 286–306 (VAIVSFAFECAGLLMLWLAPV), 309–329 (VALVGAALTGFGFALIFPALG), 347–367 (AYSVFLDLSLGITGPLAGYVA), and 369–389 (AFGYPQVFLCAAVAAAAGVAL).

The protein belongs to the major facilitator superfamily. YhhS family.

The protein localises to the cell inner membrane. This is an uncharacterized protein from Burkholderia pseudomallei (strain 1106a).